Here is a 65-residue protein sequence, read N- to C-terminus: Metallothionein-3 (65 aa).

The residue at position 1 (M1) is an N-acetylmethionine. The tract at residues 1-30 is beta; the sequence is MDPEACPCPTGGSCTCSDSCKCEGCTCASS. Positions 6, 8, 14, 16, 20, 22, 25, and 27 each coordinate a divalent metal cation. Residues 31-65 are alpha; the sequence is KKSCCPAECEKCAKDCVCKGGEGAEAEEKKCGCCQ. A Phosphoserine modification is found at S33. A divalent metal cation contacts are provided by C34, C35, C39, C42, C46, C48, C61, C63, and C64.

This sequence belongs to the metallothionein superfamily. Type 1 family.

Binds heavy metals. Contains five zinc and one copper atoms per polypeptide chain and only a negligible amount of cadmium. This Ovis aries (Sheep) protein is Metallothionein-3 (MT3).